Consider the following 515-residue polypeptide: Bifunctional purine biosynthesis protein PurH (515 aa).

Positions M1–V145 constitute an MGS-like domain.

It belongs to the PurH family.

The enzyme catalyses (6R)-10-formyltetrahydrofolate + 5-amino-1-(5-phospho-beta-D-ribosyl)imidazole-4-carboxamide = 5-formamido-1-(5-phospho-D-ribosyl)imidazole-4-carboxamide + (6S)-5,6,7,8-tetrahydrofolate. It carries out the reaction IMP + H2O = 5-formamido-1-(5-phospho-D-ribosyl)imidazole-4-carboxamide. The protein operates within purine metabolism; IMP biosynthesis via de novo pathway; 5-formamido-1-(5-phospho-D-ribosyl)imidazole-4-carboxamide from 5-amino-1-(5-phospho-D-ribosyl)imidazole-4-carboxamide (10-formyl THF route): step 1/1. It participates in purine metabolism; IMP biosynthesis via de novo pathway; IMP from 5-formamido-1-(5-phospho-D-ribosyl)imidazole-4-carboxamide: step 1/1. This is Bifunctional purine biosynthesis protein PurH from Streptococcus suis.